The chain runs to 171 residues: Ribosome maturation factor RimM (171 aa).

One can recognise a PRC barrel domain in the interval 96 to 168 (EDGFYDHELE…TATITPPEGL (73 aa)).

It belongs to the RimM family. Binds ribosomal protein uS19.

Its subcellular location is the cytoplasm. An accessory protein needed during the final step in the assembly of 30S ribosomal subunit, possibly for assembly of the head region. Essential for efficient processing of 16S rRNA. May be needed both before and after RbfA during the maturation of 16S rRNA. It has affinity for free ribosomal 30S subunits but not for 70S ribosomes. The protein is Ribosome maturation factor RimM of Corynebacterium glutamicum (strain ATCC 13032 / DSM 20300 / JCM 1318 / BCRC 11384 / CCUG 27702 / LMG 3730 / NBRC 12168 / NCIMB 10025 / NRRL B-2784 / 534).